A 196-amino-acid polypeptide reads, in one-letter code: Protein hunchback (196 aa).

Disordered regions lie at residues 16-56 (SHHH…SHTN), 63-82 (LKQQ…QQPM), and 156-196 (LTPP…KYMA). Over residues 17–29 (HHHHHHHAHHSHH) the composition is skewed to basic residues. 2 stretches are compositionally biased toward low complexity: residues 33 to 43 (SNSNASNSPHQ) and 65 to 80 (QQQQ…QQQQ). A compositionally biased stretch (basic and acidic residues) spans 177–196 (EPEKEHDLMSNSSEDMKYMA).

Belongs to the hunchback C2H2-type zinc-finger protein family.

It localises to the nucleus. Gap class segmentation protein that controls development of head structures. This chain is Protein hunchback (hb), found in Drosophila adunca (Fruit fly).